The sequence spans 355 residues: Methionine import ATP-binding protein MetN (355 aa).

One can recognise an ABC transporter domain in the interval Leu8 to Ile250. Gly42 to Ser49 contributes to the ATP binding site.

This sequence belongs to the ABC transporter superfamily. Methionine importer (TC 3.A.1.24) family. The complex is composed of two ATP-binding proteins (MetN), two transmembrane proteins (MetI) and a solute-binding protein (MetQ).

It is found in the cell membrane. The enzyme catalyses L-methionine(out) + ATP + H2O = L-methionine(in) + ADP + phosphate + H(+). It catalyses the reaction D-methionine(out) + ATP + H2O = D-methionine(in) + ADP + phosphate + H(+). Functionally, part of the ABC transporter complex MetNIQ involved in methionine import. Responsible for energy coupling to the transport system. The protein is Methionine import ATP-binding protein MetN of Streptococcus thermophilus (strain CNRZ 1066).